Here is a 349-residue protein sequence, read N- to C-terminus: Phenylalanine--tRNA ligase alpha subunit (349 aa).

A Mg(2+)-binding site is contributed by glutamate 258.

It belongs to the class-II aminoacyl-tRNA synthetase family. Phe-tRNA synthetase alpha subunit type 1 subfamily. As to quaternary structure, tetramer of two alpha and two beta subunits. Mg(2+) is required as a cofactor.

The protein localises to the cytoplasm. It catalyses the reaction tRNA(Phe) + L-phenylalanine + ATP = L-phenylalanyl-tRNA(Phe) + AMP + diphosphate + H(+). In Rickettsia bellii (strain RML369-C), this protein is Phenylalanine--tRNA ligase alpha subunit.